A 355-amino-acid chain; its full sequence is Ubiquinone biosynthesis protein COQ4 homolog, mitochondrial (355 aa).

Zn(2+) contacts are provided by H134, D135, H138, and E150.

It belongs to the COQ4 family. As to quaternary structure, component of a multi-subunit COQ enzyme complex. Requires Zn(2+) as cofactor.

Its subcellular location is the mitochondrion inner membrane. It carries out the reaction a 4-hydroxy-3-methoxy-5-(all-trans-polyprenyl)benzoate + H(+) = a 2-methoxy-6-(all-trans-polyprenyl)phenol + CO2. Its pathway is cofactor biosynthesis; ubiquinone biosynthesis. Lyase that catalyzes the C1-decarboxylation of 4-hydroxy-3-methoxy-5-(all-trans-polyprenyl)benzoic acid into 2-methoxy-6-(all-trans-polyprenyl)phenol during ubiquinone biosynthesis. This Plasmodium falciparum (isolate 3D7) protein is Ubiquinone biosynthesis protein COQ4 homolog, mitochondrial.